The primary structure comprises 619 residues: Probable pectinesterase/pectinesterase inhibitor 25 (619 aa).

Positions 1-23 (MKMQTLNFTSSLLFLSFIFLSCA) are cleaved as a signal peptide. The tract at residues 31–84 (SPSQPHSEPPSQLPFEPPVESPFFPPSQPPIFVPPSQPPSLPPSQSQSPSLACK) is disordered. The segment covering 37–72 (SEPPSQLPFEPPVESPFFPPSQPPIFVPPSQPPSLP) has biased composition (pro residues). The tract at residues 73-231 (PSQSQSPSLA…TRLYSISLGL (159 aa)) is pectinesterase inhibitor 25. N-linked (GlcNAc...) asparagine glycans are attached at residues asparagine 220, asparagine 255, asparagine 312, asparagine 325, and asparagine 364. A pectinesterase 25 region spans residues 302-601 (AVIVGPFKSD…FTVYNFTMGD (300 aa)). Threonine 380 contributes to the substrate binding site. Asparagine 382 is a glycosylation site (N-linked (GlcNAc...) asparagine). Position 410 (glutamine 410) interacts with substrate. Aspartate 433 (proton donor; for pectinesterase activity) is an active-site residue. An intrachain disulfide couples cysteine 447 to cysteine 467. Aspartate 454 (nucleophile; for pectinesterase activity) is an active-site residue. Asparagine 500 carries N-linked (GlcNAc...) asparagine glycosylation. The substrate site is built by arginine 522 and tryptophan 524. Asparagine 550, asparagine 591, and asparagine 596 each carry an N-linked (GlcNAc...) asparagine glycan.

This sequence in the N-terminal section; belongs to the PMEI family. The protein in the C-terminal section; belongs to the pectinesterase family. Expressed in siliques.

It localises to the secreted. It is found in the cell wall. It carries out the reaction [(1-&gt;4)-alpha-D-galacturonosyl methyl ester](n) + n H2O = [(1-&gt;4)-alpha-D-galacturonosyl](n) + n methanol + n H(+). It participates in glycan metabolism; pectin degradation; 2-dehydro-3-deoxy-D-gluconate from pectin: step 1/5. Its function is as follows. Acts in the modification of cell walls via demethylesterification of cell wall pectin. The chain is Probable pectinesterase/pectinesterase inhibitor 25 (PME25) from Arabidopsis thaliana (Mouse-ear cress).